A 270-amino-acid chain; its full sequence is tRNA pseudouridine synthase A (270 aa).

Catalysis depends on Asp51, which acts as the Nucleophile. Tyr109 lines the substrate pocket.

Belongs to the tRNA pseudouridine synthase TruA family. As to quaternary structure, homodimer.

It carries out the reaction uridine(38/39/40) in tRNA = pseudouridine(38/39/40) in tRNA. Functionally, formation of pseudouridine at positions 38, 39 and 40 in the anticodon stem and loop of transfer RNAs. The chain is tRNA pseudouridine synthase A from Burkholderia ambifaria (strain ATCC BAA-244 / DSM 16087 / CCUG 44356 / LMG 19182 / AMMD) (Burkholderia cepacia (strain AMMD)).